A 72-amino-acid polypeptide reads, in one-letter code: QVFDQACKGIYDRAIFKKLDRVCEDCYNLYRKPYVATTCRQNCYANSVFRQCLDDLLLIDVVDEYISGVQTV.

Position 1 is a pyrrolidone carboxylic acid (Q1). The residue at position 3 (F3) is a D-phenylalanine; in form CHH-II. Disulfide bonds link C7–C43, C23–C39, and C26–C52. A Valine amide modification is found at V72.

Stereoinversion of L-Phe (in CHH-I) to D-Phe (in CHH-II) the two forms are present in a ratio 3:1 (CHH-I/CHH-II). Produced by the medulla terminalis X-organ in the eyestalks and transported to the sinus gland where they are stored and released.

Its subcellular location is the secreted. Hormone found in the sinus gland of isopods and decapods which controls the blood sugar level. Has a secretagogue action over the amylase released from the midgut gland. May act as a stress hormone and may be involved in the control of molting and reproduction. In Procambarus bouvieri (Mexican crayfish), this protein is Crustacean hyperglycemic hormone.